The sequence spans 161 residues: Cyclic pyranopterin monophosphate synthase (161 aa).

Substrate contacts are provided by residues 75–77 (MCH) and 115–116 (ME). D130 is an active-site residue.

Belongs to the MoaC family. Homohexamer; trimer of dimers.

The catalysed reaction is (8S)-3',8-cyclo-7,8-dihydroguanosine 5'-triphosphate = cyclic pyranopterin phosphate + diphosphate. The protein operates within cofactor biosynthesis; molybdopterin biosynthesis. Functionally, catalyzes the conversion of (8S)-3',8-cyclo-7,8-dihydroguanosine 5'-triphosphate to cyclic pyranopterin monophosphate (cPMP). This Bacillus cereus (strain ATCC 10987 / NRS 248) protein is Cyclic pyranopterin monophosphate synthase.